The chain runs to 66 residues: Large ribosomal subunit protein uL29 (66 aa).

This sequence belongs to the universal ribosomal protein uL29 family.

This is Large ribosomal subunit protein uL29 from Bartonella quintana (strain Toulouse) (Rochalimaea quintana).